Here is a 485-residue protein sequence, read N- to C-terminus: MALASLPKVVMGSVAFGVFWMLAVFPSVPFLPIGRTAGALLGAVLMIVFHVISADDAYASIDLPILGLLFATMVVGGYLKNAGMFRHLGRLLAWRSQGGRDLMCRVCVVTALASALFTNDTCCVVLTEFVLELAAERNLPAKPFLLALATSANIGSSATPIGNPQNLVIAFNSKISFISFLLGILPAMLAGMGINMLMLLCMYWKELDGGACSPDEVAAGKQMEAIEEGRRTALNNNKKDDGDAATPASPEDDDGGDAESMMSENISTKHRWFMQCSEHRRKLFLKSFAYVVTVGMLVAYMLGLNMSWTAITTAIALVVVDFRDAEPCLDKVSYSLLVFFSGMFVTVSGFNKTGLPGAIWNVMAPYSKINHVTGVTVLSVIILLLSNLASNVPTVLLMGDEVAAAAATISPAAVTRSWLLLAWVSTVAGNLSLLGSAANLIVCEQARRATRNAYDLTFWNHVIFGLPSTLVVTAIGIPLIGKINI.

Transmembrane regions (helical) follow at residues 14-34, 37-57, 59-79, 106-126, and 180-200; these read VAFGVFWMLAVFPSVPFLPIG, AGALLGAVLMIVFHVISADDA, ASIDLPILGLLFATMVVGGYL, VCVVTALASALFTNDTCCVVL, and FLLGILPAMLAGMGINMLMLL. Residues 233–242 are compositionally biased toward basic and acidic residues; sequence ALNNNKKDDG. The interval 233 to 261 is disordered; the sequence is ALNNNKKDDGDAATPASPEDDDGGDAESM. Helical transmembrane passes span 283 to 303, 336 to 356, 377 to 397, 418 to 438, and 461 to 481; these read LFLKSFAYVVTVGMLVAYMLG, LLVFFSGMFVTVSGFNKTGLP, VLSVIILLLSNLASNVPTVLL, WLLLAWVSTVAGNLSLLGSAA, and HVIFGLPSTLVVTAIGIPLIG.

It belongs to the arsenite-antimonite (ArsB) efflux (TC 2.A.45) family.

It localises to the cell membrane. Its function is as follows. Silicon efflux transporter involved in silicon transport in shoots. In the nodes, involved with LSI2 and NIP2-2/LSI6 in silicon intervascular transfer, which is required for the preferential distribution of silicon, such as hyperaccumulation of silicon in the husk. Silicon is beneficial to plant growth and helps plants to overcome abiotic and biotic stresses by preventing lodging (falling over) and increasing resistance to pests and diseases, as well as other stresses. This chain is Silicon efflux transporter LSI3, found in Oryza sativa subsp. japonica (Rice).